The primary structure comprises 276 residues: Large ribosomal subunit protein uL2 (276 aa).

The tract at residues 225–276 (MNPNDHPHGGGEGRNPIGRNPVTPWGKPALGAKTRKKKHPSNRFIVKRRGKK) is disordered. Over residues 257–276 (KTRKKKHPSNRFIVKRRGKK) the composition is skewed to basic residues.

This sequence belongs to the universal ribosomal protein uL2 family. Part of the 50S ribosomal subunit. Forms a bridge to the 30S subunit in the 70S ribosome.

One of the primary rRNA binding proteins. Required for association of the 30S and 50S subunits to form the 70S ribosome, for tRNA binding and peptide bond formation. It has been suggested to have peptidyltransferase activity; this is somewhat controversial. Makes several contacts with the 16S rRNA in the 70S ribosome. This chain is Large ribosomal subunit protein uL2, found in Desulfitobacterium hafniense (strain Y51).